We begin with the raw amino-acid sequence, 120 residues long: MERHQHLLSEYQQILTLSEQMLMLATVENWNALVDLEMTYLKAVENTANITISSCTSPVLQELLRQKLRSILENEIEIKRLLQRRLDKLSELVGQSTRQQAVNRTYGQFPDQALLLGETQ.

The tract at residues 1–50 (MERHQHLLSEYQQILTLSEQMLMLATVENWNALVDLEMTYLKAVENTANI) is required for homodimerization. Positions 60–98 (LQELLRQKLRSILENEIEIKRLLQRRLDKLSELVGQSTR) are fliD binding.

This sequence belongs to the FliT family. In terms of assembly, homodimer. Interacts with FliD and FlhC.

The protein resides in the cytoplasm. Its subcellular location is the cytosol. In terms of biological role, dual-function protein that regulates the transcription of class 2 flagellar operons and that also acts as an export chaperone for the filament-capping protein FliD. As a transcriptional regulator, acts as an anti-FlhDC factor; it directly binds FlhC, thus inhibiting the binding of the FlhC/FlhD complex to class 2 promoters, resulting in decreased expression of class 2 flagellar operons. As a chaperone, effects FliD transition to the membrane by preventing its premature polymerization, and by directing it to the export apparatus. This Yersinia pestis bv. Antiqua (strain Antiqua) protein is Flagellar protein FliT.